A 145-amino-acid chain; its full sequence is Large ribosomal subunit protein uL11 (145 aa).

This sequence belongs to the universal ribosomal protein uL11 family. Part of the ribosomal stalk of the 50S ribosomal subunit. Interacts with L10 and the large rRNA to form the base of the stalk. L10 forms an elongated spine to which L12 dimers bind in a sequential fashion forming a multimeric L10(L12)X complex. Post-translationally, one or more lysine residues are methylated.

Forms part of the ribosomal stalk which helps the ribosome interact with GTP-bound translation factors. In Sulfurihydrogenibium sp. (strain YO3AOP1), this protein is Large ribosomal subunit protein uL11.